The sequence spans 113 residues: Small ribosomal subunit protein bS6 (113 aa).

This sequence belongs to the bacterial ribosomal protein bS6 family.

In terms of biological role, binds together with bS18 to 16S ribosomal RNA. This is Small ribosomal subunit protein bS6 from Pseudoalteromonas translucida (strain TAC 125).